The chain runs to 199 residues: Recombination protein RecR (199 aa).

The segment at 57–72 adopts a C4-type zinc-finger fold; that stretch reads CQACRTFTEETLCPIC. The 96-residue stretch at 81–176 folds into the Toprim domain; it reads EVICVVETPA…SVSRIAHGVP (96 aa).

It belongs to the RecR family.

Functionally, may play a role in DNA repair. It seems to be involved in an RecBC-independent recombinational process of DNA repair. It may act with RecF and RecO. The protein is Recombination protein RecR of Shewanella woodyi (strain ATCC 51908 / MS32).